We begin with the raw amino-acid sequence, 96 residues long: Neutrophil defensin 1 (96 aa).

An N-terminal signal peptide occupies residues 1–19; that stretch reads MRTLVILAAILLVALQAQA. Positions 20–66 are excised as a propeptide; that stretch reads EPLQARTDEATAAQEQIPTDNPEVVVSLAWDESLAPKDSVPGLRKNM. Cystine bridges form between Cys68-Cys96, Cys70-Cys85, and Cys75-Cys95. Tyr87 bears the Phosphotyrosine mark.

In terms of assembly, tetramer. Dimer. Interacts with RETN. Post-translationally, ADP-ribosylation drastically reduces cytotoxic and antibacterial activities, and enhances IL8 production.

It localises to the secreted. Functionally, effector molecule of the innate immune system that acts via antibiotic-like properties against a broad array of infectious agents including bacteria, fungi, and viruses or by promoting the activation and maturation of some APCs. Interacts with the essential precursor of cell wall synthesis lipid II to inhibit bacterial cell wall synthesis. Inhibits adenovirus infection via inhibition of viral disassembly at the vertex region, thereby restricting the release of internal capsid protein pVI, which is required for endosomal membrane penetration during cell entry. In addition, interaction with adenovirus capsid leads to the redirection of viral particles to TLR4 thereby promoting a NLRP3-mediated inflammasome response and interleukin 1-beta (IL-1beta) release. Induces the production of proinflammatory cytokines including type I interferon (IFN) in plasmacytoid dendritic cells (pDCs) by triggering the degradation of NFKBIA and nuclear translocation of IRF1, both of which are required for activation of pDCs. This is Neutrophil defensin 1 from Macaca mulatta (Rhesus macaque).